The following is a 418-amino-acid chain: F-box protein At1g10780 (418 aa).

The F-box domain occupies 1–47 (MDSLPDAILQYILSYLTSARDVAACNCVSKRWKESTDSVKSVVFHRN).

The sequence is that of F-box protein At1g10780 from Arabidopsis thaliana (Mouse-ear cress).